A 124-amino-acid polypeptide reads, in one-letter code: Small ribosomal subunit protein uS11 (124 aa).

The protein belongs to the universal ribosomal protein uS11 family. Part of the 30S ribosomal subunit.

Located on the platform of the 30S subunit. The sequence is that of Small ribosomal subunit protein uS11 from Methanococcus aeolicus (strain ATCC BAA-1280 / DSM 17508 / OCM 812 / Nankai-3).